We begin with the raw amino-acid sequence, 393 residues long: tRNA (guanine-N(7)-)-methyltransferase (393 aa).

Glu124, Glu149, and Asp176 together coordinate S-adenosyl-L-methionine. Asp232 lines the substrate pocket.

This sequence belongs to the class I-like SAM-binding methyltransferase superfamily. TrmB family.

It carries out the reaction guanosine(46) in tRNA + S-adenosyl-L-methionine = N(7)-methylguanosine(46) in tRNA + S-adenosyl-L-homocysteine. The protein operates within tRNA modification; N(7)-methylguanine-tRNA biosynthesis. In terms of biological role, catalyzes the formation of N(7)-methylguanine at position 46 (m7G46) in tRNA. This Helicobacter pylori (strain ATCC 700392 / 26695) (Campylobacter pylori) protein is tRNA (guanine-N(7)-)-methyltransferase.